The sequence spans 954 residues: Glycine dehydrogenase (decarboxylating) (954 aa).

N6-(pyridoxal phosphate)lysine is present on lysine 704.

It belongs to the GcvP family. In terms of assembly, the glycine cleavage system is composed of four proteins: P, T, L and H. Requires pyridoxal 5'-phosphate as cofactor.

It catalyses the reaction N(6)-[(R)-lipoyl]-L-lysyl-[glycine-cleavage complex H protein] + glycine + H(+) = N(6)-[(R)-S(8)-aminomethyldihydrolipoyl]-L-lysyl-[glycine-cleavage complex H protein] + CO2. In terms of biological role, the glycine cleavage system catalyzes the degradation of glycine. The P protein binds the alpha-amino group of glycine through its pyridoxal phosphate cofactor; CO(2) is released and the remaining methylamine moiety is then transferred to the lipoamide cofactor of the H protein. This is Glycine dehydrogenase (decarboxylating) from Vibrio vulnificus (strain YJ016).